Consider the following 269-residue polypeptide: Small ribosomal subunit protein uS2 (269 aa).

Positions 228-269 are disordered; the sequence is QLDSDDDYEEFDESLAEGDYDDYDEEEDEDSETVSSQEGEEE. The segment covering 230–269 has biased composition (acidic residues); sequence DSDDDYEEFDESLAEGDYDDYDEEEDEDSETVSSQEGEEE.

It belongs to the universal ribosomal protein uS2 family.

The protein is Small ribosomal subunit protein uS2 of Crocosphaera subtropica (strain ATCC 51142 / BH68) (Cyanothece sp. (strain ATCC 51142)).